The primary structure comprises 450 residues: Histidinol dehydrogenase (450 aa).

The NAD(+) site is built by Y135, Q197, and N225. T248, Q270, and H273 together coordinate substrate. Residues Q270 and H273 each coordinate Zn(2+). Catalysis depends on proton acceptor residues E339 and H340. Substrate is bound by residues H340, D373, E427, and H432. D373 is a Zn(2+) binding site. H432 is a Zn(2+) binding site.

This sequence belongs to the histidinol dehydrogenase family. Requires Zn(2+) as cofactor.

The catalysed reaction is L-histidinol + 2 NAD(+) + H2O = L-histidine + 2 NADH + 3 H(+). Its pathway is amino-acid biosynthesis; L-histidine biosynthesis; L-histidine from 5-phospho-alpha-D-ribose 1-diphosphate: step 9/9. Functionally, catalyzes the sequential NAD-dependent oxidations of L-histidinol to L-histidinaldehyde and then to L-histidine. This is Histidinol dehydrogenase from Corynebacterium jeikeium (strain K411).